Here is a 220-residue protein sequence, read N- to C-terminus: Probable pterin-4-alpha-carbinolamine dehydratase, chloroplastic (220 aa).

A chloroplast-targeting transit peptide spans 1–50 (MAATSSSPPCNISASSLLLRQPSRSILKVFGLLPPVSRNNRKLGRLTVTR).

The protein belongs to the pterin-4-alpha-carbinolamine dehydratase family. In terms of assembly, interacts with SDIR1. Interacts with AIRP2. Ubiquitinated by SDIR1. Ubiquitination leads to its subsequent degradation, thus controlling abscisic acid (ABA) signaling. Ubiquitinated by AIRP2. Ubiquitination leads to its subsequent degradation, thus controlling abscisic acid (ABA) signaling during drought stress.

The protein localises to the plastid. Its subcellular location is the chloroplast. It localises to the cell membrane. The protein resides in the nucleus. It catalyses the reaction (4aS,6R)-4a-hydroxy-L-erythro-5,6,7,8-tetrahydrobiopterin = (6R)-L-erythro-6,7-dihydrobiopterin + H2O. Its function is as follows. Involved in tetrahydrobiopterin biosynthesis. Interacts with and acts downstream of the E3 ubiquitin-protein ligase SDIR1 in abscisic acid (ABA) and salt stress signaling. Regulates the expression of the bZIP transcription factor ABI5, which mediates responses to ABA during seed germination and salt stress. The SDIR1-ATP1/SDIRIP1 complex plays an important role in ABA signaling through the ubiquitination pathway. Acts downstream of AIRP2 in regulation of ABA signaling during drought stress. The polypeptide is Probable pterin-4-alpha-carbinolamine dehydratase, chloroplastic (Arabidopsis thaliana (Mouse-ear cress)).